The following is a 71-amino-acid chain: Bowman-Birk type trypsin inhibitor (71 aa).

6 disulfide bridges follow: Cys-10/Cys-67, Cys-11/Cys-27, Cys-14/Cys-63, Cys-17/Cys-25, Cys-35/Cys-42, and Cys-39/Cys-55.

It belongs to the Bowman-Birk serine protease inhibitor family.

Inhibits trypsin but not chymotrypsin. The chain is Bowman-Birk type trypsin inhibitor from Triticum aestivum (Wheat).